The following is a 723-amino-acid chain: Peroxisomal bifunctional enzyme (723 aa).

The segment at 1–282 (MAEYTRLHNA…LAERKANKWS (282 aa)) is enoyl-CoA hydratase / isomerase. At Lys-38 the chain carries N6-succinyllysine. Gly-101 serves as a coordination point for substrate. Lys-165 is subject to N6-acetyllysine; alternate. N6-succinyllysine; alternate is present on Lys-165. Residue Lys-171 is modified to N6-acetyllysine. Lys-219 carries the post-translational modification N6-acetyllysine; alternate. Lys-219 is modified (N6-succinyllysine; alternate). At Lys-250 the chain carries N6-acetyllysine. N6-succinyllysine occurs at positions 280 and 290. Residues 283 to 572 (TPSGASWKTA…DVLCELGRFG (290 aa)) are 3-hydroxyacyl-CoA dehydrogenase. An N6-acetyllysine mark is found at Lys-346, Lys-350, and Lys-464. The residue at position 532 (Lys-532) is an N6-succinyllysine. Thr-548 carries the post-translational modification Phosphothreonine. Lys-577 carries the post-translational modification N6-succinyllysine. Residues Lys-584, Lys-591, and Lys-710 each carry the N6-acetyllysine; alternate modification. 3 positions are modified to N6-succinyllysine; alternate: Lys-584, Lys-591, and Lys-710. Residues 699–723 (KKLASQGNPPQKEWQSLAGSPSSKL) form a disordered region. The span at 703-723 (SQGNPPQKEWQSLAGSPSSKL) shows a compositional bias: polar residues. A Phosphoserine modification is found at Ser-718. Positions 721–723 (SKL) match the Microbody targeting signal motif. An N6-succinyllysine modification is found at Lys-722.

The protein in the N-terminal section; belongs to the enoyl-CoA hydratase/isomerase family. It in the C-terminal section; belongs to the 3-hydroxyacyl-CoA dehydrogenase family. In terms of assembly, monomer. Post-translationally, acetylated, leading to enhanced enzyme activity. Acetylation is enhanced by up to 80% after treatment either with trichostin A (TSA) or with nicotinamide (NAM) with highest increase on Lys-346. Acetylation and enzyme activity increased by about 1.5% on addition of fatty acids.

It is found in the peroxisome. It catalyses the reaction a (3S)-3-hydroxyacyl-CoA = a (2E)-enoyl-CoA + H2O. It carries out the reaction a 4-saturated-(3S)-3-hydroxyacyl-CoA = a (3E)-enoyl-CoA + H2O. The catalysed reaction is a (3Z)-enoyl-CoA = a 4-saturated (2E)-enoyl-CoA. The enzyme catalyses a (3E)-enoyl-CoA = a 4-saturated (2E)-enoyl-CoA. It catalyses the reaction a (3S)-3-hydroxyacyl-CoA + NAD(+) = a 3-oxoacyl-CoA + NADH + H(+). It carries out the reaction (2S,3S)-3-hydroxy-2-methylbutanoyl-CoA = (2E)-2-methylbut-2-enoyl-CoA + H2O. The catalysed reaction is (3S)-hydroxyhexadecanoyl-CoA + NAD(+) = 3-oxohexadecanoyl-CoA + NADH + H(+). The enzyme catalyses (3S)-hydroxyhexadecanoyl-CoA = (2E)-hexadecenoyl-CoA + H2O. It catalyses the reaction (2E)-hexadecenedioyl-CoA + H2O = (3S)-hydroxyhexadecanedioyl-CoA. It carries out the reaction (3S)-hydroxyhexadecanedioyl-CoA + NAD(+) = 3-oxohexadecanedioyl-CoA + NADH + H(+). The catalysed reaction is (3E,5Z)-tetradecadienoyl-CoA = (2E,5Z)-tetradecadienoyl-CoA. The enzyme catalyses (3E,5Z)-octadienoyl-CoA = (2E,5Z)-octadienoyl-CoA. It catalyses the reaction (3S)-hydroxydecanoyl-CoA + NAD(+) = 3-oxodecanoyl-CoA + NADH + H(+). It carries out the reaction (3E)-decenoyl-CoA = (2E)-decenoyl-CoA. The catalysed reaction is (3Z)-hexenoyl-CoA = (2E)-hexenoyl-CoA. The enzyme catalyses (3E)-hexenoyl-CoA = (2E)-hexenoyl-CoA. It catalyses the reaction (3S)-hydroxydecanoyl-CoA = (2E)-decenoyl-CoA + H2O. It carries out the reaction (3S)-hydroxyhexanoyl-CoA = (2E)-hexenoyl-CoA + H2O. It functions in the pathway lipid metabolism; fatty acid beta-oxidation. Enzyme activity enhanced by acetylation. Functionally, peroxisomal trifunctional enzyme possessing 2-enoyl-CoA hydratase, 3-hydroxyacyl-CoA dehydrogenase, and delta 3, delta 2-enoyl-CoA isomerase activities. Catalyzes two of the four reactions of the long chain fatty acids peroxisomal beta-oxidation pathway. Can also use branched-chain fatty acids such as 2-methyl-2E-butenoyl-CoA as a substrate, which is hydrated into (2S,3S)-3-hydroxy-2-methylbutanoyl-CoA. Optimal isomerase for 2,5 double bonds into 3,5 form isomerization in a range of enoyl-CoA species. Also able to isomerize both 3-cis and 3-trans double bonds into the 2-trans form in a range of enoyl-CoA species. Regulates the amount of medium-chain dicarboxylic fatty acids which are essential regulators of all fatty acid oxidation pathways. Also involved in the degradation of long-chain dicarboxylic acids through peroxisomal beta-oxidation. This is Peroxisomal bifunctional enzyme (EHHADH) from Pongo abelii (Sumatran orangutan).